The chain runs to 98 residues: Large ribosomal subunit protein uL23 (98 aa).

The protein belongs to the universal ribosomal protein uL23 family. Part of the 50S ribosomal subunit. Contacts protein L29, and trigger factor when it is bound to the ribosome.

Its function is as follows. One of the early assembly proteins it binds 23S rRNA. One of the proteins that surrounds the polypeptide exit tunnel on the outside of the ribosome. Forms the main docking site for trigger factor binding to the ribosome. The sequence is that of Large ribosomal subunit protein uL23 from Methylobacterium sp. (strain 4-46).